Here is a 487-residue protein sequence, read N- to C-terminus: Glutamyl-tRNA(Gln) amidotransferase subunit A (487 aa).

Catalysis depends on charge relay system residues K79 and S158. The active-site Acyl-ester intermediate is the S182.

This sequence belongs to the amidase family. GatA subfamily. In terms of assembly, heterotrimer of A, B and C subunits.

It catalyses the reaction L-glutamyl-tRNA(Gln) + L-glutamine + ATP + H2O = L-glutaminyl-tRNA(Gln) + L-glutamate + ADP + phosphate + H(+). Its function is as follows. Allows the formation of correctly charged Gln-tRNA(Gln) through the transamidation of misacylated Glu-tRNA(Gln) in organisms which lack glutaminyl-tRNA synthetase. The reaction takes place in the presence of glutamine and ATP through an activated gamma-phospho-Glu-tRNA(Gln). This is Glutamyl-tRNA(Gln) amidotransferase subunit A from Ehrlichia ruminantium (strain Welgevonden).